Reading from the N-terminus, the 222-residue chain is Charged multivesicular body protein 3 (222 aa).

Residue Gly-2 is the site of N-myristoyl glycine attachment. Residues 2–113 (GLFGKTQEKP…LQKSTEVMKA (112 aa)) form an intramolecular interaction with C-terminus region. Residues 22–54 (KIRKEMRVVDRQIRDIQREEEKVKRSVKDAAKK) are a coiled coil. Important for autoinhibitory function regions lie at residues 59–64 (VCVVLA) and 168–169 (IL). A coiled-coil region spans residues 149 to 222 (ESMDDQEEME…MQSRLATLRS (74 aa)). Positions 151-220 (MDDQEEMEEA…EAMQSRLATL (70 aa)) are intramolecular interaction with N-terminus. Positions 151–222 (MDDQEEMEEA…MQSRLATLRS (72 aa)) are interaction with VPS4A. Lys-179 is covalently cross-linked (Glycyl lysine isopeptide (Lys-Gly) (interchain with G-Cter in ubiquitin)). A disordered region spans residues 180–222 (APSKVTDALPEPEPLGAMAASEDEEEEEEALEAMQSRLATLRS). Interaction with STAMBP regions lie at residues 196–222 (AMAA…TLRS), 203–207 (EEEEE), and 221–222 (RS). Ser-200 bears the Phosphoserine mark. The segment covering 200–210 (SEDEEEEEEAL) has biased composition (acidic residues). Residues 201-211 (EDEEEEEEALE) carry the MIT-interacting motif motif.

This sequence belongs to the SNF7 family. In terms of assembly, probable core component of the endosomal sorting required for transport complex III (ESCRT-III). ESCRT-III components are thought to multimerize to form a flat lattice on the perimeter membrane of the endosome. Several assembly forms of ESCRT-III may exist that interact and act sequentially. Forms a metastable monomer in solution; its core structure (without part of the putative autoinhibitory C-terminal acidic region) oligomerizes into a flat lattice via two different dimerization interfaces. In vitro, heteromerizes with CHMP2A (but not CHMP4) to form helical tubular structures that expose membrane-interacting sites on the outside whereas VPS4B can associate on the inside of the tubule. May interact with IGFBP7; the relevance of such interaction however remains unclear. Interacts with CHMP2A. Interacts with CHMP4A; the interaction requires the release of CHMP4A autoinhibition. Interacts with VPS4A. Interacts with STAMBP; the interaction appears to relieve the autoinhibition of CHMP3. Interacts with VTA1.

It localises to the cytoplasm. The protein resides in the cytosol. It is found in the membrane. Its subcellular location is the endosome. The protein localises to the late endosome membrane. Probable core component of the endosomal sorting required for transport complex III (ESCRT-III) which is involved in multivesicular bodies (MVBs) formation and sorting of endosomal cargo proteins into MVBs. MVBs contain intraluminal vesicles (ILVs) that are generated by invagination and scission from the limiting membrane of the endosome and mostly are delivered to lysosomes enabling degradation of membrane proteins, such as stimulated growth factor receptors, lysosomal enzymes and lipids. The MVB pathway appears to require the sequential function of ESCRT-O, -I,-II and -III complexes. ESCRT-III proteins mostly dissociate from the invaginating membrane before the ILV is released. The ESCRT machinery also functions in topologically equivalent membrane fission events, such as the terminal stages of cytokinesis and the budding of enveloped viruses (lentiviruses). ESCRT-III proteins are believed to mediate the necessary vesicle extrusion and/or membrane fission activities, possibly in conjunction with the AAA ATPase VPS4. Selectively binds to phosphatidylinositol 3,5-bisphosphate PtdIns(3,5)P2 and PtdIns(3,4)P2 in preference to other phosphoinositides tested. Involved in late stages of cytokinesis. Plays a role in endosomal sorting/trafficking of EGF receptor. This is Charged multivesicular body protein 3 (CHMP3) from Bos taurus (Bovine).